The following is an 855-amino-acid chain: Transcription factor gaf1 (855 aa).

A compositionally biased stretch (polar residues) spans 72 to 112 (KNLTPNGDSNTLTPDTFSDPTAPSSAQSVPPTSSAETTADN). Disordered stretches follow at residues 72-126 (KNLT…PAYS), 149-184 (TSFD…ESQP), 229-287 (SHNL…GFPS), 412-483 (PNSN…DMFS), 602-643 (NKNA…TRTT), and 680-768 (KKRN…SQSM). The span at 149-168 (TSFDESTAKSKKRSIADSHF) shows a compositional bias: basic and acidic residues. Residue Ser-150 is modified to Phosphoserine. 2 stretches are compositionally biased toward low complexity: residues 240 to 250 (PANSNNSASPN) and 428 to 444 (NSSK…DSNQ). Over residues 445-476 (ENAESFNPSISSHNSAEWASGETTGHSSNSPL) the composition is skewed to polar residues. The segment covering 614–623 (AEDKKGDANT) has biased composition (basic and acidic residues). Low complexity-rich tracts occupy residues 625–643 (RANA…TRTT) and 707–717 (SKSSSAKSTAA). The segment at 635–659 (CTNCQTRTTPLWRRSPDGQPLCNAC) adopts a GATA-type zinc-finger fold. Phosphoserine is present on residues Ser-727 and Ser-729. The segment covering 755 to 767 (QQQSSENESKSQS) has biased composition (low complexity).

It localises to the nucleus. In terms of biological role, transcriptional activator. This Schizosaccharomyces pombe (strain 972 / ATCC 24843) (Fission yeast) protein is Transcription factor gaf1 (gaf1).